A 179-amino-acid chain; its full sequence is Large ribosomal subunit protein uL5 (179 aa).

It belongs to the universal ribosomal protein uL5 family. In terms of assembly, part of the 50S ribosomal subunit; part of the 5S rRNA/L5/L18/L25 subcomplex. Contacts the 5S rRNA and the P site tRNA. Forms a bridge to the 30S subunit in the 70S ribosome.

Its function is as follows. This is one of the proteins that bind and probably mediate the attachment of the 5S RNA into the large ribosomal subunit, where it forms part of the central protuberance. In the 70S ribosome it contacts protein S13 of the 30S subunit (bridge B1b), connecting the 2 subunits; this bridge is implicated in subunit movement. Contacts the P site tRNA; the 5S rRNA and some of its associated proteins might help stabilize positioning of ribosome-bound tRNAs. In Alkaliphilus metalliredigens (strain QYMF), this protein is Large ribosomal subunit protein uL5.